We begin with the raw amino-acid sequence, 344 residues long: MQVNVDLKENSYKVFIDEFKELTIKGNVAIITNPKVGGLWLEFLLKNLKCDKKFIISVPDGEEYKNLNTIEQILEQLFSSKCDRKTTLIALGGGVISDMTGFAASIFERGIDFINFPTTLLAQVDASVGGKTGVNNKFGKNLIGSFHQPKAVFCESEFLNTLPPREFSAGVAEAIKMAVMFDKKFFEFFENSTLKSSDEIAKMVQTCVKIKADVVVKDEKETGIRAVLNYGHTFAHVIERITDYKEFLHGEAVSIGINMANNLALRLGFLSKNEVFKISETLKKFNLPTTFKIPNADEFYELFFMDKKTQNSKIKFILANSIGEFKICTDIPKDVVIATLKDFE.

Residues Asp60–Lys65, Gly94–Asp98, Thr118–Thr119, Lys131, Lys140, and Phe158–Thr161 contribute to the NAD(+) site. Positions 173, 232, and 249 each coordinate Zn(2+).

Belongs to the sugar phosphate cyclases superfamily. Dehydroquinate synthase family. Requires Co(2+) as cofactor. Zn(2+) is required as a cofactor. The cofactor is NAD(+).

The protein resides in the cytoplasm. The catalysed reaction is 7-phospho-2-dehydro-3-deoxy-D-arabino-heptonate = 3-dehydroquinate + phosphate. Its pathway is metabolic intermediate biosynthesis; chorismate biosynthesis; chorismate from D-erythrose 4-phosphate and phosphoenolpyruvate: step 2/7. Functionally, catalyzes the conversion of 3-deoxy-D-arabino-heptulosonate 7-phosphate (DAHP) to dehydroquinate (DHQ). The chain is 3-dehydroquinate synthase from Campylobacter hominis (strain ATCC BAA-381 / DSM 21671 / CCUG 45161 / LMG 19568 / NCTC 13146 / CH001A).